Consider the following 299-residue polypeptide: Probable 3-hydroxyisobutyrate dehydrogenase-like 2, mitochondrial (299 aa).

Residues 14 to 43 and S108 contribute to the NAD(+) site; that span reads TRIG…TVYA. K182 is a catalytic residue. K250 contributes to the NAD(+) binding site.

This sequence belongs to the HIBADH-related family. 3-hydroxyisobutyrate dehydrogenase subfamily.

It localises to the mitochondrion. The enzyme catalyses 3-hydroxy-2-methylpropanoate + NAD(+) = 2-methyl-3-oxopropanoate + NADH + H(+). Its pathway is amino-acid degradation; L-valine degradation. The protein is Probable 3-hydroxyisobutyrate dehydrogenase-like 2, mitochondrial of Arabidopsis thaliana (Mouse-ear cress).